The chain runs to 144 residues: Transcriptional regulator SlyA (144 aa).

Residues 2–135 (ESPLGSDLAR…LLHLIRKLEQ (134 aa)) form the HTH marR-type domain. The H-T-H motif DNA-binding region spans 49–72 (QIQLAKAIGIEQPSLVRTLDQLEE).

It belongs to the SlyA family. Homodimer.

Its function is as follows. Transcription regulator that can specifically activate or repress expression of target genes. The polypeptide is Transcriptional regulator SlyA (Klebsiella pneumoniae (strain 342)).